Reading from the N-terminus, the 311-residue chain is Olfactory receptor 8B8 (311 aa).

At 1-25 the chain is on the extracellular side; it reads MAAENSSFVTQFILAGLTDQPGVQI. Asn5 is a glycosylation site (N-linked (GlcNAc...) asparagine). Residues 26–46 traverse the membrane as a helical segment; the sequence is PLFFLFLGFYVVTVVGNLGLI. The Cytoplasmic portion of the chain corresponds to 47-54; it reads TLIRLNSH. Residues 55–75 traverse the membrane as a helical segment; that stretch reads LHTPMYFFLYNLSFIDFCYSS. The Extracellular segment spans residues 76 to 99; it reads VITPKMLMSFVLKKNSISYAGCMT. Cys97 and Cys189 are disulfide-bonded. Residues 100–120 form a helical membrane-spanning segment; that stretch reads QLFFFLFFVVSESFILSAMAY. Residues 121-139 are Cytoplasmic-facing; that stretch reads DRYVAICNPLLYMVTMSPQ. Residues 140-160 traverse the membrane as a helical segment; that stretch reads VCFLLLLGVYGMGFAGAMAHT. Over 161–197 the chain is Extracellular; sequence ACMMGVTFCANNLVNHYMCDILPLLECACTSTYVNEL. A helical transmembrane segment spans residues 198–217; it reads VVFVVVGIDIGVPTVTIFIS. The Cytoplasmic portion of the chain corresponds to 218-237; the sequence is YALILSSIFHIDSTEGRSKA. The helical transmembrane segment at 238-258 threads the bilayer; sequence FSTCSSHIIAVSLFFGSGAFM. Over 259 to 271 the chain is Extracellular; sequence YLKPFSLLAMNQG. The helical transmembrane segment at 272 to 292 threads the bilayer; that stretch reads KVSSLFYTTVVPMLNPLIYSL. The Cytoplasmic portion of the chain corresponds to 293-311; that stretch reads RNKDVKVALKKILNKNAFS.

The protein belongs to the G-protein coupled receptor 1 family. In terms of tissue distribution, expressed in the tongue and testis.

The protein localises to the cell membrane. Odorant receptor (Potential). May be involved in taste perception. This chain is Olfactory receptor 8B8, found in Homo sapiens (Human).